Here is a 561-residue protein sequence, read N- to C-terminus: MKKVWLNRYPADVPTEINPDRYQSLVDMFEQSVARYADQPAFVNMGEVMTFRKLEERSRAFAAYLQQGLGLKKGDRVALMMPNLLQYPVALFGILRAGMIVVNVNPLYTPRELEHQLNDSGASAIVIVSNFAHTLEKVVDKTAVQHVILTRMGDQLSTAKGTLVNFVVKYIKRLVPKYHLPDAISFRSALHNGYRMQYVKPELVPEDLAFLQYTGGTTGVAKGAMLTHRNMLANLEQVNATYGPLLHPGKELVVTALPLYHIFALTINCLLFIELGGQNLLITNPRDIPGLVKELAKYPFTAITGVNTLFNALLNNKEFQQLDFSSLHLSAGGGMPVQQVVAERWVKLTGQYLLEGYGLTECAPLVSVNPYDIDYHSGSIGLPVPSTEAKLVDDDDNEVSPGQPGELCVRGPQVMLGYWQRPDATDEIIKNGWLHTGDIAVMDEEGFLRIVDRKKDMILVSGFNVYPNEIEDVVMQHPGVQEVAAVGVPSGSSGEAVKIFVVKKDPSLTEESLVTFCRRQLTGYKVPKLVEFRDELPKSNVGKILRRELRDEARGKVDNKA.

Position 213–224 (213–224) interacts with ATP; sequence YTGGTTGVAKGA.

This sequence belongs to the ATP-dependent AMP-binding enzyme family. Mg(2+) serves as cofactor.

Its subcellular location is the membrane. It catalyses the reaction a long-chain fatty acid + ATP + CoA = a long-chain fatty acyl-CoA + AMP + diphosphate. Its pathway is lipid metabolism; fatty acid beta-oxidation. Catalyzes the esterification, concomitant with transport, of exogenous long-chain fatty acids into metabolically active CoA thioesters for subsequent degradation or incorporation into phospholipids. The chain is Long-chain-fatty-acid--CoA ligase (fadD) from Escherichia coli O157:H7.